We begin with the raw amino-acid sequence, 361 residues long: Holliday junction branch migration complex subunit RuvB (361 aa).

Residues 1–21 (MHKDEDQRLLGAVPLPNDPDR) are disordered. Residues 1–184 (MHKDEDQRLL…FGIPIRLNFY (184 aa)) are large ATPase domain (RuvB-L). ATP contacts are provided by residues leucine 23, arginine 24, glycine 65, lysine 68, threonine 69, threonine 70, 131–133 (EDY), arginine 174, tyrosine 184, and arginine 221. Threonine 69 is a binding site for Mg(2+). A small ATPAse domain (RuvB-S) region spans residues 185-255 (TIEELEYIVQ…IADEALSRLE (71 aa)). The tract at residues 258 to 361 (HLGLDPLDRR…QTVLWDEADD (104 aa)) is head domain (RuvB-H). DNA is bound by residues arginine 294, arginine 313, and arginine 318.

It belongs to the RuvB family. As to quaternary structure, homohexamer. Forms an RuvA(8)-RuvB(12)-Holliday junction (HJ) complex. HJ DNA is sandwiched between 2 RuvA tetramers; dsDNA enters through RuvA and exits via RuvB. An RuvB hexamer assembles on each DNA strand where it exits the tetramer. Each RuvB hexamer is contacted by two RuvA subunits (via domain III) on 2 adjacent RuvB subunits; this complex drives branch migration. In the full resolvosome a probable DNA-RuvA(4)-RuvB(12)-RuvC(2) complex forms which resolves the HJ.

The protein localises to the cytoplasm. It carries out the reaction ATP + H2O = ADP + phosphate + H(+). Its function is as follows. The RuvA-RuvB-RuvC complex processes Holliday junction (HJ) DNA during genetic recombination and DNA repair, while the RuvA-RuvB complex plays an important role in the rescue of blocked DNA replication forks via replication fork reversal (RFR). RuvA specifically binds to HJ cruciform DNA, conferring on it an open structure. The RuvB hexamer acts as an ATP-dependent pump, pulling dsDNA into and through the RuvAB complex. RuvB forms 2 homohexamers on either side of HJ DNA bound by 1 or 2 RuvA tetramers; 4 subunits per hexamer contact DNA at a time. Coordinated motions by a converter formed by DNA-disengaged RuvB subunits stimulates ATP hydrolysis and nucleotide exchange. Immobilization of the converter enables RuvB to convert the ATP-contained energy into a lever motion, pulling 2 nucleotides of DNA out of the RuvA tetramer per ATP hydrolyzed, thus driving DNA branch migration. The RuvB motors rotate together with the DNA substrate, which together with the progressing nucleotide cycle form the mechanistic basis for DNA recombination by continuous HJ branch migration. Branch migration allows RuvC to scan DNA until it finds its consensus sequence, where it cleaves and resolves cruciform DNA. In Bartonella henselae (strain ATCC 49882 / DSM 28221 / CCUG 30454 / Houston 1) (Rochalimaea henselae), this protein is Holliday junction branch migration complex subunit RuvB.